Consider the following 64-residue polypeptide: Putative neurotoxin-G (64 aa).

The signal sequence occupies residues 1 to 19 (MFAMVTVTVLLLISSGIFC). 3 cysteine pairs are disulfide-bonded: Cys-25–Cys-45, Cys-32–Cys-54, and Cys-36–Cys-56.

As to expression, expressed by the venom gland.

The protein resides in the secreted. The polypeptide is Putative neurotoxin-G (Lychas mucronatus (Chinese swimming scorpion)).